Consider the following 956-residue polypeptide: Chromatin assembly factor 1 subunit A (956 aa).

Residues 1 to 49 form a binds to PCNA region; that stretch reads MLEELECGAPGARGAATAMDCKDRPAFPVKKLIQARLPFKRLNLVPKGK. Positions 1 to 314 are binds to CBX1 chromo shadow domain; it reads MLEELECGAP…QHSSTSPFPT (314 aa). Disordered stretches follow at residues 45-65 and 122-155; these read VPKGKADDMSDDQGTSVQSKS and DSNEQPDSLVDHNKLNSEASPSREAINGQREDTG. Residues 56–65 show a composition bias toward polar residues; sequence DQGTSVQSKS. Phosphoserine occurs at positions 65, 123, 138, 141, and 143. Lysine 182 is covalently cross-linked (Glycyl lysine isopeptide (Lys-Gly) (interchain with G-Cter in SUMO1); alternate). Lysine 182 is covalently cross-linked (Glycyl lysine isopeptide (Lys-Gly) (interchain with G-Cter in SUMO2); alternate). Positions 188-222 are disordered; sequence VGCGGAGRRGDSQECSPRSCPELTSGPRMCPRKEQ. Phosphoserine occurs at positions 206 and 224. The PxVxL motif motif lies at 233–246; that stretch reads FKGKVPMVVLQDIL. Disordered stretches follow at residues 250-432 and 599-639; these read PPQI…KRLR and DSDE…VPHG. Low complexity-rich tracts occupy residues 282–296 and 307–317; these read LSHSSLSSPSSTSSP and SSTSPFPTSTP. Serine 310 bears the Phosphoserine mark. The segment covering 329 to 432 has biased composition (basic and acidic residues); the sequence is STEKNKLRLQ…RKKEEEKRLR (104 aa). Composition is skewed to acidic residues over residues 599-610 and 618-633; these read DSDEEWEEEEPG and GDDDDDMGEDEDEDDG. A necessary for homodimerization and competence for chromatin assembly region spans residues 642–678; the sequence is SEDEGVTEECADPENHKVRQKLKAKEWDEFLAKGKRF. The interval 660-956 is binds to p60; sequence RQKLKAKEWD…TLTASPLGAS (297 aa). Threonine 722 is subject to Phosphothreonine. Residues 765 to 790 are disordered; that stretch reads LLSNHTGSPRSPSTTYLHTPTPSEDA. Positions 767–786 are enriched in polar residues; sequence SNHTGSPRSPSTTYLHTPTP. 3 positions are modified to phosphoserine: serine 772, serine 775, and serine 803. Disordered stretches follow at residues 844-873 and 933-956; these read SVPSAPKEDSGSVPSTGPSQGTPISLKRKS and SGAGGGVGVDTGKATLTASPLGAS. Positions 855-866 are enriched in polar residues; that stretch reads SVPSTGPSQGTP. At threonine 865 the chain carries Phosphothreonine. Phosphoserine is present on residues serine 868, serine 873, and serine 951.

Belongs to the CHAF1A family. In terms of assembly, homodimer. Part of the CAF-1 complex that contains RBBP4, CHAF1B and CHAF1A. CHAF1A binds directly to CHAF1B. Only minor amounts of RBBP4 are complexed with CHAF1A and CHAF1B in G1 phase. Interacts with PCNA; the interaction is direct. Interacts (via the PxVxL motif) with CBX5; the interaction is direct. Interacts with MBD1. Interacts with histones H3.1, H3.2 and H3.1t.

It localises to the nucleus. Functionally, acts as a component of the histone chaperone complex chromatin assembly factor 1 (CAF-1), which assembles histone octamers onto DNA during replication and repair. CAF-1 performs the first step of the nucleosome assembly process, bringing newly synthesized histones H3 and H4 to replicating DNA; histones H2A/H2B can bind to this chromatin precursor subsequent to DNA replication to complete the histone octamer. It may play a role in heterochromatin maintenance in proliferating cells by bringing newly synthesized cbx proteins to heterochromatic DNA replication foci. This Homo sapiens (Human) protein is Chromatin assembly factor 1 subunit A.